The chain runs to 130 residues: Small ribosomal subunit protein uS11c (130 aa).

The protein belongs to the universal ribosomal protein uS11 family. As to quaternary structure, part of the 30S ribosomal subunit.

It is found in the plastid. The protein localises to the chloroplast. This Stigeoclonium helveticum (Green alga) protein is Small ribosomal subunit protein uS11c.